A 394-amino-acid polypeptide reads, in one-letter code: Glutamyl-tRNA reductase (394 aa).

Residues 45–48, serine 99, 104–106, and glutamine 110 contribute to the substrate site; these read TCNR and EEQ. Residue cysteine 46 is the Nucleophile of the active site. Position 175–180 (175–180) interacts with NADP(+); that stretch reads GLGNIG.

The protein belongs to the glutamyl-tRNA reductase family. In terms of assembly, homodimer.

It catalyses the reaction (S)-4-amino-5-oxopentanoate + tRNA(Glu) + NADP(+) = L-glutamyl-tRNA(Glu) + NADPH + H(+). It functions in the pathway porphyrin-containing compound metabolism; protoporphyrin-IX biosynthesis; 5-aminolevulinate from L-glutamyl-tRNA(Glu): step 1/2. Catalyzes the NADPH-dependent reduction of glutamyl-tRNA(Glu) to glutamate 1-semialdehyde (GSA). This chain is Glutamyl-tRNA reductase, found in Caldicellulosiruptor saccharolyticus (strain ATCC 43494 / DSM 8903 / Tp8T 6331).